The following is a 249-amino-acid chain: Pyridoxine 5'-phosphate synthase (249 aa).

Position 12 (N12) interacts with 3-amino-2-oxopropyl phosphate. 14–15 (DH) lines the 1-deoxy-D-xylulose 5-phosphate pocket. R23 lines the 3-amino-2-oxopropyl phosphate pocket. The active-site Proton acceptor is H48. 1-deoxy-D-xylulose 5-phosphate-binding residues include R50 and H55. E75 serves as the catalytic Proton acceptor. Residue T105 participates in 1-deoxy-D-xylulose 5-phosphate binding. H199 (proton donor) is an active-site residue. 3-amino-2-oxopropyl phosphate-binding positions include G200 and 221–222 (GH).

It belongs to the PNP synthase family. As to quaternary structure, homooctamer; tetramer of dimers.

The protein localises to the cytoplasm. The catalysed reaction is 3-amino-2-oxopropyl phosphate + 1-deoxy-D-xylulose 5-phosphate = pyridoxine 5'-phosphate + phosphate + 2 H2O + H(+). It functions in the pathway cofactor biosynthesis; pyridoxine 5'-phosphate biosynthesis; pyridoxine 5'-phosphate from D-erythrose 4-phosphate: step 5/5. In terms of biological role, catalyzes the complicated ring closure reaction between the two acyclic compounds 1-deoxy-D-xylulose-5-phosphate (DXP) and 3-amino-2-oxopropyl phosphate (1-amino-acetone-3-phosphate or AAP) to form pyridoxine 5'-phosphate (PNP) and inorganic phosphate. The chain is Pyridoxine 5'-phosphate synthase from Roseobacter denitrificans (strain ATCC 33942 / OCh 114) (Erythrobacter sp. (strain OCh 114)).